Here is a 120-residue protein sequence, read N- to C-terminus: Large ribosomal subunit protein uL18 (120 aa).

It belongs to the universal ribosomal protein uL18 family. As to quaternary structure, part of the 50S ribosomal subunit; part of the 5S rRNA/L5/L18/L25 subcomplex. Contacts the 5S and 23S rRNAs.

Functionally, this is one of the proteins that bind and probably mediate the attachment of the 5S RNA into the large ribosomal subunit, where it forms part of the central protuberance. This Rhodopseudomonas palustris (strain BisB18) protein is Large ribosomal subunit protein uL18.